The primary structure comprises 251 residues: 3-deoxy-manno-octulosonate cytidylyltransferase (251 aa).

Belongs to the KdsB family.

It is found in the cytoplasm. It catalyses the reaction 3-deoxy-alpha-D-manno-oct-2-ulosonate + CTP = CMP-3-deoxy-beta-D-manno-octulosonate + diphosphate. The protein operates within nucleotide-sugar biosynthesis; CMP-3-deoxy-D-manno-octulosonate biosynthesis; CMP-3-deoxy-D-manno-octulosonate from 3-deoxy-D-manno-octulosonate and CTP: step 1/1. It participates in bacterial outer membrane biogenesis; lipopolysaccharide biosynthesis. Its function is as follows. Activates KDO (a required 8-carbon sugar) for incorporation into bacterial lipopolysaccharide in Gram-negative bacteria. This chain is 3-deoxy-manno-octulosonate cytidylyltransferase, found in Brucella ovis (strain ATCC 25840 / 63/290 / NCTC 10512).